The chain runs to 153 residues: 3-hydroxyacyl-[acyl-carrier-protein] dehydratase FabZ (153 aa).

Residue His-52 is part of the active site.

This sequence belongs to the thioester dehydratase family. FabZ subfamily.

The protein localises to the cytoplasm. It catalyses the reaction a (3R)-hydroxyacyl-[ACP] = a (2E)-enoyl-[ACP] + H2O. Involved in unsaturated fatty acids biosynthesis. Catalyzes the dehydration of short chain beta-hydroxyacyl-ACPs and long chain saturated and unsaturated beta-hydroxyacyl-ACPs. This chain is 3-hydroxyacyl-[acyl-carrier-protein] dehydratase FabZ, found in Magnetococcus marinus (strain ATCC BAA-1437 / JCM 17883 / MC-1).